A 449-amino-acid polypeptide reads, in one-letter code: Hyaluronidase-1 (449 aa).

Positions 1–23 (MYHLWIKCLAAWIFLKRCNGVHA) are cleaved as a signal peptide. Disulfide bonds link Cys-47/Cys-340 and Cys-211/Cys-227. N-linked (GlcNAc...) asparagine glycosylation is found at Asn-67, Asn-103, and Asn-111. Residue Glu-135 is the Proton donor of the active site. Asn-153 carries an N-linked (GlcNAc...) asparagine glycan. Asn-357 carries N-linked (GlcNAc...) asparagine glycosylation. Cystine bridges form between Cys-365–Cys-376, Cys-370–Cys-427, and Cys-429–Cys-438. A glycan (N-linked (GlcNAc...) asparagine) is linked at Asn-401. The EGF-like domain occupies 427–438 (CQCYQGWKGLYC).

It belongs to the glycosyl hydrolase 56 family. Monomer. In terms of tissue distribution, expressed by the venom gland.

Its subcellular location is the secreted. The enzyme catalyses Random hydrolysis of (1-&gt;4)-linkages between N-acetyl-beta-D-glucosamine and D-glucuronate residues in hyaluronate.. Snake venom endo-hyaluronidase that degrades hyaluronan to smaller oligosaccharide fragments. In venom, it is not toxic by itself, but increases the diffusion of other venom proteins by degrading the extracellular matrix. In addition, it displays antiedematogenic activity. In Bitis arietans (African puff adder), this protein is Hyaluronidase-1.